The chain runs to 472 residues: MAFQQGEAAPVSTQSSLSFTQGFLLGQLSVVLLIGAFIKFFIFGEAPPPPSRGLRASTHRRSNSIFSQDAPPPRSLREKPSTSNVLRPVPSSATNTRSILRKTYYSAIPPNPSSKHRIHHSSHQPESLDWFNVLIAQTIAQYRQTAYLLKDSPTSSILHSLTAALNNPEKKPSFIDKITVTDISLGEEFPIFSNCRIIAVDDPMSDGGRLQALLDVDMSDDNLSIAVETSLVLNYPKPCSAILPVALSISVVRFSGTLCISLVPASTPPLHTPSPMPSPPTAGAQPAAGAQPTDGGDIPPKSSSKSNIAFSFLPDYRLDLSVRSLIGSRSRLQDVPKVAQLVEARVHAWFEERVVEPRVQVVGLPDLWPRMGRTGVRTGDESETGSNTASRPAMSVDMSSPGHLQGDGGNHEEELRFRGLGPRPPLPFDAVSRTSSYQVETGAPRSPSLTRERSLGDDFHMPGSMPEAPGAQ.

Residues 1–22 are Lumenal-facing; that stretch reads MAFQQGEAAPVSTQSSLSFTQG. Residues 23–43 form a helical membrane-spanning segment; that stretch reads FLLGQLSVVLLIGAFIKFFIF. Topologically, residues 44–472 are cytoplasmic; sequence GEAPPPPSRG…GSMPEAPGAQ (429 aa). Disordered regions lie at residues 51-92, 270-303, and 370-472; these read SRGL…VPSS, LHTPSPMPSPPTAGAQPAAGAQPTDGGDIPPKSS, and RMGR…PGAQ. The segment covering 81–92 has biased composition (polar residues); that stretch reads STSNVLRPVPSS. An SMP-LTD domain is found at 124-365; sequence QPESLDWFNV…EPRVQVVGLP (242 aa). Positions 270 to 280 are enriched in pro residues; the sequence is LHTPSPMPSPP. The segment covering 281 to 297 has biased composition (low complexity); that stretch reads TAGAQPAAGAQPTDGGD. Residues 450–460 show a composition bias toward basic and acidic residues; it reads TRERSLGDDFH.

This sequence belongs to the MMM1 family. In terms of assembly, homodimer. Component of the ER-mitochondria encounter structure (ERMES) or MDM complex, composed of mmm1, mdm10, mdm12 and mdm34. A mmm1 homodimer associates with one molecule of mdm12 on each side in a pairwise head-to-tail manner, and the SMP-LTD domains of mmm1 and mdm12 generate a continuous hydrophobic tunnel for phospholipid trafficking.

Its subcellular location is the endoplasmic reticulum membrane. In terms of biological role, component of the ERMES/MDM complex, which serves as a molecular tether to connect the endoplasmic reticulum (ER) and mitochondria. Components of this complex are involved in the control of mitochondrial shape and protein biogenesis, and function in nonvesicular lipid trafficking between the ER and mitochondria. The mdm12-mmm1 subcomplex functions in the major beta-barrel assembly pathway that is responsible for biogenesis of all outer membrane beta-barrel proteins, and acts in a late step after the SAM complex. The mdm10-mdm12-mmm1 subcomplex further acts in the TOM40-specific pathway after the action of the mdm12-mmm1 complex. Essential for establishing and maintaining the structure of mitochondria and maintenance of mtDNA nucleoids. The sequence is that of Maintenance of mitochondrial morphology protein 1 from Emericella nidulans (strain FGSC A4 / ATCC 38163 / CBS 112.46 / NRRL 194 / M139) (Aspergillus nidulans).